Here is a 380-residue protein sequence, read N- to C-terminus: Succinyl-diaminopimelate desuccinylase (380 aa).

Residue His70 coordinates Zn(2+). Asp72 is a catalytic residue. Residue Asp103 coordinates Zn(2+). Catalysis depends on Glu137, which acts as the Proton acceptor. The Zn(2+) site is built by Glu138, Glu166, and His352.

The protein belongs to the peptidase M20A family. DapE subfamily. As to quaternary structure, homodimer. Zn(2+) serves as cofactor. The cofactor is Co(2+).

The catalysed reaction is N-succinyl-(2S,6S)-2,6-diaminopimelate + H2O = (2S,6S)-2,6-diaminopimelate + succinate. The protein operates within amino-acid biosynthesis; L-lysine biosynthesis via DAP pathway; LL-2,6-diaminopimelate from (S)-tetrahydrodipicolinate (succinylase route): step 3/3. Its function is as follows. Catalyzes the hydrolysis of N-succinyl-L,L-diaminopimelic acid (SDAP), forming succinate and LL-2,6-diaminopimelate (DAP), an intermediate involved in the bacterial biosynthesis of lysine and meso-diaminopimelic acid, an essential component of bacterial cell walls. The protein is Succinyl-diaminopimelate desuccinylase of Azoarcus sp. (strain BH72).